Reading from the N-terminus, the 352-residue chain is Geranylgeranyl transferase type-1 subunit beta (352 aa).

4 PFTB repeats span residues 135 to 180, 187 to 228, 236 to 276, and 283 to 325; these read VNKK…FILD, KESA…SLLG, FKEQ…MMID, and FASI…SFGN. Residues 213-215 and 255-258 contribute to the geranylgeranyl diphosphate site; these read HGG and RTNK. The Zn(2+) site is built by aspartate 261 and cysteine 263. 264–267 contributes to the geranylgeranyl diphosphate binding site; sequence YAFW. Histidine 313 provides a ligand contact to Zn(2+).

Belongs to the protein prenyltransferase subunit beta family. As to quaternary structure, heterodimer of an alpha and a beta subunit. The cofactor is Zn(2+). Mg(2+) serves as cofactor.

The catalysed reaction is geranylgeranyl diphosphate + L-cysteinyl-[protein] = S-geranylgeranyl-L-cysteinyl-[protein] + diphosphate. In terms of biological role, catalyzes the transfer of a geranyl-geranyl moiety from geranyl-geranyl pyrophosphate to a cysteine at the fourth position from the C-terminus of proteins having the C-terminal sequence Cys-aliphatic-aliphatic-X. The protein is Geranylgeranyl transferase type-1 subunit beta (pggt1b) of Dictyostelium discoideum (Social amoeba).